Reading from the N-terminus, the 92-residue chain is PqqA binding protein (92 aa).

Belongs to the PqqD family. In terms of assembly, monomer. Interacts with PqqE.

Its pathway is cofactor biosynthesis; pyrroloquinoline quinone biosynthesis. Its function is as follows. Functions as a PqqA binding protein and presents PqqA to PqqE, in the pyrroloquinoline quinone (PQQ) biosynthetic pathway. The polypeptide is PqqA binding protein (Klebsiella pneumoniae (strain 342)).